A 688-amino-acid chain; its full sequence is MPRKFPLEKTRNIGIMAHIDAGKTTTTERILFHTGKIHKIGETHDGDSQMDWMKQEQERGITITSAATTAFWKEHRINIIDTPGHVDFTVEVSRSLRVLDGAVAVIDAKAGVEPQTETVWRQATEYKVPRIIFVNKMDKIGASFDYAVKTLYQRLGINASPIQLPIGSENEFKGIVDLLEMTGVEFLGTSDEKFKTIEIPEYMKELAQNKRIELIEKMANYDEELMMDYLNGKEITVEKLKNVIRQATLKADFFPVLCGSAFKNKGVKKILDAIIDYLPSPMDVSSIVGCNFENKEIIRKTSDNEPFTALAFKVMTDPYVGKLTFFRVYAGTIKTGSYVTNATKQVKERLGRLLQMHANSREEIKEVYAGDIVAAVGLKNTTTGDTLTSINDDIILESMNFPEPVIEIAIEPKTKADQDKIGIALSKLSEEDPTFKIYTNRETGQTIIAGMGELHLEIILDRLKTEFKVEANVNQPQVAYRETLTKISTTEGKFIRQSGGRGQYGHVIIRFEPNSDKGNEFINKIVGGVIPKEYIPAVKKGLEESLSNGILAGFPLIDVKATLIDGSYHDVDSSEIAFKIAASMALKQTKNEGNLVILEPIMEVEIITPNDYIGNVIGDLTSRRGKLENQDSRENTVIIKALVPLSEMFGYATILRSNTQGRASFIMQFLKYERAPKNIAEEIIKKRN.

The region spanning 8–282 (EKTRNIGIMA…AIIDYLPSPM (275 aa)) is the tr-type G domain. GTP-binding positions include 17–24 (AHIDAGKT), 81–85 (DTPGH), and 135–138 (NKMD).

The protein belongs to the TRAFAC class translation factor GTPase superfamily. Classic translation factor GTPase family. EF-G/EF-2 subfamily.

The protein resides in the cytoplasm. In terms of biological role, catalyzes the GTP-dependent ribosomal translocation step during translation elongation. During this step, the ribosome changes from the pre-translocational (PRE) to the post-translocational (POST) state as the newly formed A-site-bound peptidyl-tRNA and P-site-bound deacylated tRNA move to the P and E sites, respectively. Catalyzes the coordinated movement of the two tRNA molecules, the mRNA and conformational changes in the ribosome. The chain is Elongation factor G from Phytoplasma mali (strain AT).